A 299-amino-acid chain; its full sequence is MFRVTGTLSAASSPAVAAASFSAALRLSITPTLAIASPPHLRWFSKFSRQFLGGRISSLRPRIPSPCPIRLSGFPALKMRASFSSGSSGSSASREILVQHLLVKNNDVELFAELQKKFLDGEEMSDLAAEYSICPSKKDGGILGWVKLGQMVPEFEEAAFKAELNQVVRCRTQFGLHLLQVLSEREPVKDIQVEELHSKMQDPVFMDEAQLIDVREPNEIEIASLPGFKVFPLRQFGTWAPDITSKLNPEKDTFVLCKVGGRSMQVANWLQSQGFKSVYNITGGIQAYSLKVDPSIPTY.

The transit peptide at 1 to 81 (MFRVTGTLSA…SGFPALKMRA (81 aa)) directs the protein to the chloroplast. S82 is modified (N-acetylserine). The 91-residue stretch at 93–183 (SREILVQHLL…FGLHLLQVLS (91 aa)) folds into the PpiC domain. The Rhodanese domain maps to 205–297 (FMDEAQLIDV…YSLKVDPSIP (93 aa)). C257 acts as the Cysteine persulfide intermediate in catalysis.

The protein resides in the plastid. Its subcellular location is the chloroplast. This is Rhodanese-like/PpiC domain-containing protein 12, chloroplastic from Arabidopsis thaliana (Mouse-ear cress).